Here is a 362-residue protein sequence, read N- to C-terminus: MSFNTFGHMFRVTTFGESHGVAIGCVVDGCPPLIALTEADIQRDLDRRRPGQSRFTTQRQEADQVKILSGVMVHPQSGLQVTTGAPIALLIENTDQRSKDYSEIKDKFRPGHADFTYEAKYGIRDYRGGGRSSARETATRVAAGAIARKVVPGITVRAALVQMGPHQIDRDNWDWEEVGNNPFFCPDKDKAKFFEDYLDGIRKNGSSIGAVIEVVADGVPAGWGAPIYAKLDTDIAAALMSINAVKGVEIGDGFATAALTGEQNADEMRAGNDGPSFLSNHAGGILGGISTGQPVVARFAVKPTSSILAPRKTVDRDGHDTDILTKGRHDPCVGIRAVSVAEAMVACVLADHLIRHRGQIGG.

Residues arginine 48 and arginine 54 each contribute to the NADP(+) site. FMN-binding positions include 131–133 (RSS), 243–244 (NA), glycine 287, 302–306 (KPTSS), and arginine 328.

This sequence belongs to the chorismate synthase family. As to quaternary structure, homotetramer. FMNH2 is required as a cofactor.

The enzyme catalyses 5-O-(1-carboxyvinyl)-3-phosphoshikimate = chorismate + phosphate. It participates in metabolic intermediate biosynthesis; chorismate biosynthesis; chorismate from D-erythrose 4-phosphate and phosphoenolpyruvate: step 7/7. Catalyzes the anti-1,4-elimination of the C-3 phosphate and the C-6 proR hydrogen from 5-enolpyruvylshikimate-3-phosphate (EPSP) to yield chorismate, which is the branch point compound that serves as the starting substrate for the three terminal pathways of aromatic amino acid biosynthesis. This reaction introduces a second double bond into the aromatic ring system. This is Chorismate synthase from Rhodopseudomonas palustris (strain BisB18).